The primary structure comprises 489 residues: MAIDLRPFIPFGRGALSQATDPFRAAVEFTLMPMLITNPHLPDNPIVFANPAFLKLTGYEADEVMGRNCRFLQGHGTDPAHVCAIKSAIAAEKPIDIDIINYKKSGEAFWNRLHISPVHNANGRLQHFVSSQLDVTLELSRLVELEKERKTLSIETARSKDQLDYIVEVANIGFWTREFYSGKMTCSAECRRIYGFTPDEPVHFDTILDLVVLEDRMTVVQKAHQAVTGEPYSIEYRIVTRLGETRWLETRAKALTGENPLVLGIVQDVTERKKAEANKALVSREIAHRFKNSMAMVQSIANQTLRNTYDPEQANRLFSERLRALSQAHDMLLKENWAGATIQQICATALAPFNSTFANRIHMSGPHLLVSDRVTVALSLAFYELATNAVKYGALSNEKGVINITWAIMEDKGEKKFHMRWAESRGPEVMQPARRGFGQRLLHSVLAEELKAKCDVEFAASGLLIDVLAPITPEVFPGMGHNVPEQRIA.

In terms of domain architecture, PAS spans 19–93 (ATDPFRAAVE…AIKSAIAAEK (75 aa)). The residue at position 69 (C69) is an S-4a-FMN cysteine. 2 consecutive PAC domains span residues 93–147 (KPID…ELEK) and 232–281 (YSIE…NKAL). The HWE histidine kinase domain stretch occupies residues 259 to 341 (NPLVLGIVQD…LLKENWAGAT (83 aa)). H288 bears the Phosphohistidine; by autocatalysis mark.

Post-translationally, FMN binds covalently to cysteine after exposure to blue light and this bond is spontaneously broken in the dark.

It carries out the reaction ATP + protein L-histidine = ADP + protein N-phospho-L-histidine.. Its function is as follows. Photosensitive kinase that is involved in increased bacterial virulence upon exposure to light. Once ejected from an infected animal host, sunlight acts as an environmental signal that increases the virulence of the bacterium, preparing it for infection of the next host. This photoreceptor protein is directly related to the bacterium's survival and replication within host macrophages. This is Blue-light-activated histidine kinase from Brucella ovis (strain ATCC 25840 / 63/290 / NCTC 10512).